A 323-amino-acid polypeptide reads, in one-letter code: Fructose-1,6-bisphosphatase class 1 (323 aa).

Glu93, Asp114, Leu116, and Asp117 together coordinate Mg(2+). Substrate contacts are provided by residues 117–120, Asn205, Tyr233, and Lys263; that span reads DGSS. Glu269 lines the Mg(2+) pocket.

Belongs to the FBPase class 1 family. Homotetramer. Requires Mg(2+) as cofactor.

The protein localises to the cytoplasm. The enzyme catalyses beta-D-fructose 1,6-bisphosphate + H2O = beta-D-fructose 6-phosphate + phosphate. It participates in carbohydrate biosynthesis; gluconeogenesis. This Sulfurihydrogenibium sp. (strain YO3AOP1) protein is Fructose-1,6-bisphosphatase class 1.